Here is a 37-residue protein sequence, read N- to C-terminus: Large ribosomal subunit protein bL36c (37 aa).

This sequence belongs to the bacterial ribosomal protein bL36 family.

It is found in the plastid. The protein localises to the chloroplast. This chain is Large ribosomal subunit protein bL36c, found in Pleurastrum terricola (Filamentous green alga).